The following is a 197-amino-acid chain: Peptide deformylase (197 aa).

Fe cation-binding residues include Cys106 and His148. Glu149 is an active-site residue. Residue His152 coordinates Fe cation.

It belongs to the polypeptide deformylase family. Requires Fe(2+) as cofactor.

The catalysed reaction is N-terminal N-formyl-L-methionyl-[peptide] + H2O = N-terminal L-methionyl-[peptide] + formate. In terms of biological role, removes the formyl group from the N-terminal Met of newly synthesized proteins. Requires at least a dipeptide for an efficient rate of reaction. N-terminal L-methionine is a prerequisite for activity but the enzyme has broad specificity at other positions. The polypeptide is Peptide deformylase (Mycobacterium leprae (strain TN)).